The following is a 66-amino-acid chain: Large ribosomal subunit protein bL33c (66 aa).

This sequence belongs to the bacterial ribosomal protein bL33 family.

It is found in the plastid. The protein resides in the chloroplast. In Liriodendron tulipifera (Tuliptree), this protein is Large ribosomal subunit protein bL33c.